Here is a 154-residue protein sequence, read N- to C-terminus: SsrA-binding protein (154 aa).

A disordered region spans residues Asp-134–Asn-154.

Belongs to the SmpB family.

It localises to the cytoplasm. Its function is as follows. Required for rescue of stalled ribosomes mediated by trans-translation. Binds to transfer-messenger RNA (tmRNA), required for stable association of tmRNA with ribosomes. tmRNA and SmpB together mimic tRNA shape, replacing the anticodon stem-loop with SmpB. tmRNA is encoded by the ssrA gene; the 2 termini fold to resemble tRNA(Ala) and it encodes a 'tag peptide', a short internal open reading frame. During trans-translation Ala-aminoacylated tmRNA acts like a tRNA, entering the A-site of stalled ribosomes, displacing the stalled mRNA. The ribosome then switches to translate the ORF on the tmRNA; the nascent peptide is terminated with the 'tag peptide' encoded by the tmRNA and targeted for degradation. The ribosome is freed to recommence translation, which seems to be the essential function of trans-translation. The protein is SsrA-binding protein of Leuconostoc mesenteroides subsp. mesenteroides (strain ATCC 8293 / DSM 20343 / BCRC 11652 / CCM 1803 / JCM 6124 / NCDO 523 / NBRC 100496 / NCIMB 8023 / NCTC 12954 / NRRL B-1118 / 37Y).